The sequence spans 78 residues: Large ribosomal subunit protein bL28 (78 aa).

It belongs to the bacterial ribosomal protein bL28 family.

This Synechococcus sp. (strain CC9605) protein is Large ribosomal subunit protein bL28.